The sequence spans 95 residues: Aspartyl/glutamyl-tRNA(Asn/Gln) amidotransferase subunit C (95 aa).

Belongs to the GatC family. Heterotrimer of A, B and C subunits.

It carries out the reaction L-glutamyl-tRNA(Gln) + L-glutamine + ATP + H2O = L-glutaminyl-tRNA(Gln) + L-glutamate + ADP + phosphate + H(+). It catalyses the reaction L-aspartyl-tRNA(Asn) + L-glutamine + ATP + H2O = L-asparaginyl-tRNA(Asn) + L-glutamate + ADP + phosphate + 2 H(+). In terms of biological role, allows the formation of correctly charged Asn-tRNA(Asn) or Gln-tRNA(Gln) through the transamidation of misacylated Asp-tRNA(Asn) or Glu-tRNA(Gln) in organisms which lack either or both of asparaginyl-tRNA or glutaminyl-tRNA synthetases. The reaction takes place in the presence of glutamine and ATP through an activated phospho-Asp-tRNA(Asn) or phospho-Glu-tRNA(Gln). The sequence is that of Aspartyl/glutamyl-tRNA(Asn/Gln) amidotransferase subunit C from Pseudomonas fluorescens (strain SBW25).